The primary structure comprises 113 residues: MKFMEIEKTNRMNALFEFYAALLTDKQMNYIELYYADDYSLAEIAEEFQVSRQAVYDNIKRTEKLLEDYEMKLHMYSDYVVRSQIFDEILNKYPEDAYLKEKIAILTSIDNRE.

It belongs to the UPF0122 family.

Might take part in the signal recognition particle (SRP) pathway. This is inferred from the conservation of its genetic proximity to ftsY/ffh. May be a regulatory protein. This chain is UPF0122 protein SSU98_0878, found in Streptococcus suis (strain 98HAH33).